The primary structure comprises 278 residues: Tryptophan synthase alpha chain (278 aa).

Catalysis depends on proton acceptor residues Glu-50 and Asp-61.

This sequence belongs to the TrpA family. As to quaternary structure, tetramer of two alpha and two beta chains.

It carries out the reaction (1S,2R)-1-C-(indol-3-yl)glycerol 3-phosphate + L-serine = D-glyceraldehyde 3-phosphate + L-tryptophan + H2O. It functions in the pathway amino-acid biosynthesis; L-tryptophan biosynthesis; L-tryptophan from chorismate: step 5/5. Functionally, the alpha subunit is responsible for the aldol cleavage of indoleglycerol phosphate to indole and glyceraldehyde 3-phosphate. The sequence is that of Tryptophan synthase alpha chain from Nitrobacter hamburgensis (strain DSM 10229 / NCIMB 13809 / X14).